The chain runs to 255 residues: UPF0246 protein Cphy_1568 (255 aa).

Belongs to the UPF0246 family.

The chain is UPF0246 protein Cphy_1568 from Lachnoclostridium phytofermentans (strain ATCC 700394 / DSM 18823 / ISDg) (Clostridium phytofermentans).